The chain runs to 492 residues: Tyrosine--tRNA ligase, mitochondrial (492 aa).

L-tyrosine is bound at residue Y89. Residue D93 participates in ATP binding. The 'HIGH' region signature appears at 94 to 103; that stretch reads PTAQSLHLGN. D133, Y239, Q243, D246, and Q265 together coordinate L-tyrosine. The 'KMSKS' region signature appears at 303–307; it reads KFGKS. An ATP-binding site is contributed by K306.

It belongs to the class-I aminoacyl-tRNA synthetase family. As to quaternary structure, homodimer.

Its subcellular location is the mitochondrion matrix. It carries out the reaction tRNA(Tyr) + L-tyrosine + ATP = L-tyrosyl-tRNA(Tyr) + AMP + diphosphate + H(+). Its function is as follows. Catalyzes the attachment of tyrosine to tRNA(Tyr) in a two-step reaction: tyrosine is first activated by ATP to form Tyr-AMP and then transferred to the acceptor end of tRNA(Tyr). This chain is Tyrosine--tRNA ligase, mitochondrial (MSY1), found in Saccharomyces cerevisiae (strain ATCC 204508 / S288c) (Baker's yeast).